Here is a 157-residue protein sequence, read N- to C-terminus: Peptide methionine sulfoxide reductase MsrA (157 aa).

Cys-13 is an active-site residue.

This sequence belongs to the MsrA Met sulfoxide reductase family.

The enzyme catalyses L-methionyl-[protein] + [thioredoxin]-disulfide + H2O = L-methionyl-(S)-S-oxide-[protein] + [thioredoxin]-dithiol. It catalyses the reaction [thioredoxin]-disulfide + L-methionine + H2O = L-methionine (S)-S-oxide + [thioredoxin]-dithiol. In terms of biological role, has an important function as a repair enzyme for proteins that have been inactivated by oxidation. Catalyzes the reversible oxidation-reduction of methionine sulfoxide in proteins to methionine. The polypeptide is Peptide methionine sulfoxide reductase MsrA (Methanococcus maripaludis (strain C7 / ATCC BAA-1331)).